The primary structure comprises 159 residues: MRIGHGFDVHAFGGEGPIIIGGVRIPYEKGLLAHSDGDVALHALTDALLGAAALGDIGKLFPDTDPAFKGADSRELLREAWRRIQAKGYTLGNVDVTIIAQAPKMLPHIPQMRVFIAEDLGCHMDEVNVKATTTEKLGFTGRGEGIACEAVALLMKAAK.

Residues D8 and H10 each coordinate a divalent metal cation. 4-CDP-2-C-methyl-D-erythritol 2-phosphate is bound by residues 8–10 (DVH) and 34–35 (HS). Residue H42 coordinates a divalent metal cation. 4-CDP-2-C-methyl-D-erythritol 2-phosphate is bound by residues 56 to 58 (DIG), 61 to 65 (FPDTD), 100 to 106 (AQAPKML), 132 to 135 (TTTE), F139, and R142.

It belongs to the IspF family. Homotrimer. It depends on a divalent metal cation as a cofactor.

The catalysed reaction is 4-CDP-2-C-methyl-D-erythritol 2-phosphate = 2-C-methyl-D-erythritol 2,4-cyclic diphosphate + CMP. It functions in the pathway isoprenoid biosynthesis; isopentenyl diphosphate biosynthesis via DXP pathway; isopentenyl diphosphate from 1-deoxy-D-xylulose 5-phosphate: step 4/6. Involved in the biosynthesis of isopentenyl diphosphate (IPP) and dimethylallyl diphosphate (DMAPP), two major building blocks of isoprenoid compounds. Catalyzes the conversion of 4-diphosphocytidyl-2-C-methyl-D-erythritol 2-phosphate (CDP-ME2P) to 2-C-methyl-D-erythritol 2,4-cyclodiphosphate (ME-CPP) with a corresponding release of cytidine 5-monophosphate (CMP). The polypeptide is 2-C-methyl-D-erythritol 2,4-cyclodiphosphate synthase (Salmonella typhimurium (strain LT2 / SGSC1412 / ATCC 700720)).